A 235-amino-acid polypeptide reads, in one-letter code: Ribitol-5-phosphate cytidylyltransferase (235 aa).

Residues 7-10 (LAGG), 82-88 (GADRNTS), and S113 contribute to the CTP site.

It belongs to the IspD/TarI cytidylyltransferase family. TarI subfamily.

It catalyses the reaction D-ribitol 5-phosphate + CTP + H(+) = CDP-L-ribitol + diphosphate. The protein operates within cell wall biogenesis; poly(ribitol phosphate) teichoic acid biosynthesis. Functionally, catalyzes the transfer of the cytidylyl group of CTP to D-ribitol 5-phosphate. The protein is Ribitol-5-phosphate cytidylyltransferase of Streptococcus pneumoniae (strain CGSP14).